A 125-amino-acid chain; its full sequence is Succinate dehydrogenase assembly factor 3, mitochondrial (125 aa).

The N-terminal 30 residues, 1 to 30 (MTGRHVSRVRSLYRRILQLHRALPPDLKAL), are a transit peptide targeting the mitochondrion.

It belongs to the complex I LYR family. SDHAF3 subfamily. Interacts with Sdhb within an Sdha-Sdhb subcomplex.

It localises to the mitochondrion matrix. Plays an essential role in the assembly of succinate dehydrogenase (SDH), an enzyme complex (also referred to as respiratory complex II) that is a component of both the tricarboxylic acid (TCA) cycle and the mitochondrial electron transport chain, and which couples the oxidation of succinate to fumarate with the reduction of ubiquinone (coenzyme Q) to ubiquinol. Promotes maturation of the iron-sulfur protein subunit Sdhb of the SDH catalytic dimer, protecting it from the deleterious effects of oxidants. May act together with SDHAF1. The chain is Succinate dehydrogenase assembly factor 3, mitochondrial from Rattus norvegicus (Rat).